The primary structure comprises 88 residues: Electron transfer flavoprotein regulatory factor 1 (88 aa).

The protein belongs to the complex I LYR family. As to quaternary structure, homotetramer. Interacts with NDUFAB1. Interacts with ETFA. Interacts with ETFB.

The protein localises to the mitochondrion. Acts as a regulator of the electron transfer flavoprotein by promoting the removal of flavin from the ETF holoenzyme (composed of ETFA and ETFB). The sequence is that of Electron transfer flavoprotein regulatory factor 1 from Bos taurus (Bovine).